A 124-amino-acid chain; its full sequence is GCITTKELGTVMRSLGQNPTEAELQDMINEVDADGNGTIDFPEFLNLMARKIKDTDFEEELKEAFRVFDKDRNGFISAAELPHVMTNLGEKLTDEEVDEIIREADVDCDGQINYDEFVKVMMAK.

4 consecutive EF-hand domains span residues 1–18 (GCIT…LGQN), 19–54 (PTEA…KIKD), 56–91 (DFEE…LGEK), and 92–124 (LTDE…MMAK). Ca(2+)-binding residues include Cys-2, Glu-7, Asp-32, Asp-34, Asn-36, Thr-38, Glu-43, Asp-69, Asp-71, Asn-73, and Glu-80. N6,N6,N6-trimethyllysine is present on Lys-91. Residues Asp-105, Asp-107, Asp-109, Gln-111, and Glu-116 each contribute to the Ca(2+) site.

It belongs to the calmodulin family. As to expression, not detected in the organs tested.

In terms of biological role, calmodulin mediates the control of a large number of enzymes, ion channels and other proteins by Ca(2+). Among the enzymes to be stimulated by the calmodulin-Ca(2+) complex are a number of protein kinases and phosphatases. This Solanum tuberosum (Potato) protein is Putative calmodulin-3 (PCM3).